The chain runs to 279 residues: Tryptophan synthase alpha chain (279 aa).

Residues E50 and D61 each act as proton acceptor in the active site.

It belongs to the TrpA family. In terms of assembly, tetramer of two alpha and two beta chains.

The catalysed reaction is (1S,2R)-1-C-(indol-3-yl)glycerol 3-phosphate + L-serine = D-glyceraldehyde 3-phosphate + L-tryptophan + H2O. The protein operates within amino-acid biosynthesis; L-tryptophan biosynthesis; L-tryptophan from chorismate: step 5/5. In terms of biological role, the alpha subunit is responsible for the aldol cleavage of indoleglycerol phosphate to indole and glyceraldehyde 3-phosphate. The polypeptide is Tryptophan synthase alpha chain (Rhizobium rhizogenes (strain K84 / ATCC BAA-868) (Agrobacterium radiobacter)).